The chain runs to 417 residues: Putative F-box protein At3g58950 (417 aa).

In terms of domain architecture, F-box spans 1–53 (MDLFSSLPDEVLCHILSFLTTKEAALASVVSKRWRNQFALVPNLDIDEEGKRE).

This is Putative F-box protein At3g58950 from Arabidopsis thaliana (Mouse-ear cress).